Here is a 214-residue protein sequence, read N- to C-terminus: UPF0502 protein Pput_3252 (214 aa).

It belongs to the UPF0502 family.

This Pseudomonas putida (strain ATCC 700007 / DSM 6899 / JCM 31910 / BCRC 17059 / LMG 24140 / F1) protein is UPF0502 protein Pput_3252.